We begin with the raw amino-acid sequence, 196 residues long: SAGA-associated factor 11 homolog (196 aa).

Residues 1 to 22 (MSAANMPTTTGAQGSGNQVPTT) are disordered. An SGF11-type zinc finger spans residues 106-127 (CTCPNCDRLVAAARFAPHLEKC). Residues 144–196 (TKEGATSAHLHSAGNTGGTDDEDDVDWSSDKRRKKSNQNSRNNGSKKNNGKSF) form a disordered region. Serine 172 bears the Phosphoserine mark. Residues 180 to 196 (NQNSRNNGSKKNNGKSF) are compositionally biased toward low complexity.

Belongs to the SGF11 family. Component of some SAGA transcription coactivator-HAT complexes, at least composed of Ada2b, not/nonstop, Pcaf/Gcn5, Sgf11 and Spt3. Within the SAGA complex, Sgf11, e(y)2, and not/nonstop form an additional subcomplex of SAGA called the DUB module (deubiquitination module). Interacts directly with not/nonstop. Interacts with the AMEX complex component xmas-2. Interacts with Cbp80; important for promoter recruitment of Sgf11 that is not associated with the DUB module.

The protein resides in the nucleus. It localises to the nucleoplasm. Its subcellular location is the cytoplasm. Its function is as follows. Component of the transcription regulatory histone acetylation (HAT) complex SAGA, a multiprotein complex that activates transcription by remodeling chromatin and mediating histone acetylation and deubiquitination. Within the SAGA complex, participates in a subcomplex that specifically deubiquitinates histone H2B. The SAGA complex is recruited to specific gene promoters by activators, where it is required for transcription. Required for nuclear receptor-mediated transactivation. Binds independently on SAGA to promoters in an RNA-dependent manner. Binds to mRNA and is essential for total mRNA export from the nucleus. Required to counteract heterochromatin silencing. Controls the development of neuronal connectivity in visual system by being required for accurate axon targeting in the optic lobe. Required for expression of ecdysone-induced genes such as br/broad. This is SAGA-associated factor 11 homolog from Drosophila erecta (Fruit fly).